The following is a 333-amino-acid chain: 5-formaminoimidazole-4-carboxamide-1-(beta)-D-ribofuranosyl 5'-monophosphate synthetase (333 aa).

Residues His-20 and Ser-85 each contribute to the 5-amino-1-(5-phospho-beta-D-ribosyl)imidazole-4-carboxamide site. In terms of domain architecture, ATP-grasp spans 106–313; that stretch reads RELIKWEADQ…YFDRPMDMGE (208 aa). Residues 136-187 and Glu-209 each bind ATP; that span reads PEEV…VPAY. Asn-229 is a 5-amino-1-(5-phospho-beta-D-ribosyl)imidazole-4-carboxamide binding site. Mg(2+) is bound by residues Glu-268 and Glu-281.

Belongs to the phosphohexose mutase family. Mg(2+) is required as a cofactor. It depends on Mn(2+) as a cofactor.

It catalyses the reaction 5-amino-1-(5-phospho-beta-D-ribosyl)imidazole-4-carboxamide + formate + ATP = 5-formamido-1-(5-phospho-D-ribosyl)imidazole-4-carboxamide + ADP + phosphate. It functions in the pathway purine metabolism; IMP biosynthesis via de novo pathway; 5-formamido-1-(5-phospho-D-ribosyl)imidazole-4-carboxamide from 5-amino-1-(5-phospho-D-ribosyl)imidazole-4-carboxamide (formate route): step 1/1. Functionally, catalyzes the ATP- and formate-dependent formylation of 5-aminoimidazole-4-carboxamide-1-beta-d-ribofuranosyl 5'-monophosphate (AICAR) to 5-formaminoimidazole-4-carboxamide-1-beta-d-ribofuranosyl 5'-monophosphate (FAICAR) in the absence of folates. This Pyrobaculum islandicum (strain DSM 4184 / JCM 9189 / GEO3) protein is 5-formaminoimidazole-4-carboxamide-1-(beta)-D-ribofuranosyl 5'-monophosphate synthetase.